A 299-amino-acid polypeptide reads, in one-letter code: GTPase Era (299 aa).

An Era-type G domain is found at 4 to 171 (KSGFVAILGR…VDILSENLGE (168 aa)). Positions 12-19 (GRPNVGKS) are G1. 12-19 (GRPNVGKS) contacts GTP. Residues 38–42 (QTTRN) form a G2 region. The G3 stretch occupies residues 59-62 (DTPG). GTP-binding positions include 59–63 (DTPGI) and 121–124 (NKID). Positions 121–124 (NKID) are G4. Positions 150–152 (ISA) are G5. The region spanning 202 to 280 (TREEIPHSVA…FLETWVKVKK (79 aa)) is the KH type-2 domain.

This sequence belongs to the TRAFAC class TrmE-Era-EngA-EngB-Septin-like GTPase superfamily. Era GTPase family. In terms of assembly, monomer.

It localises to the cytoplasm. The protein localises to the cell membrane. Functionally, an essential GTPase that binds both GDP and GTP, with rapid nucleotide exchange. Plays a role in 16S rRNA processing and 30S ribosomal subunit biogenesis and possibly also in cell cycle regulation and energy metabolism. This Streptococcus pneumoniae (strain JJA) protein is GTPase Era.